Here is a 227-residue protein sequence, read N- to C-terminus: LysM and putative peptidoglycan-binding domain-containing protein 1 (227 aa).

A compositionally biased stretch (pro residues) spans 1–11 (MASPSRQPPPG). Residues 1-20 (MASPSRQPPPGGSGLLHGSR) form a disordered region. 2 positions are modified to phosphoserine: S23 and S33. In terms of domain architecture, LysM spans 40–84 (LEHQLEPGDTLAGLALKYGVTMEQIKRANRLYTNDSIFLKKTLYI). A disordered region spans residues 95–150 (NGLDSEEEKDGEEEVRPSNDEVWPHSTERKKQETGAGRANGEVFPTPGQETPTPIH). The segment covering 98–107 (DSEEEKDGEE) has biased composition (acidic residues). Position 99 is a phosphoserine (S99). A compositionally biased stretch (basic and acidic residues) spans 108–127 (EVRPSNDEVWPHSTERKKQE). Residues S166, S181, S194, and S212 each carry the phosphoserine modification. Residues 172–196 (AAQKLKKGESGVPGEDAGLHLSSPR) form a disordered region.

This chain is LysM and putative peptidoglycan-binding domain-containing protein 1 (LYSMD1), found in Macaca fascicularis (Crab-eating macaque).